Here is a 71-residue protein sequence, read N- to C-terminus: Gas vesicle protein A (71 aa).

The interval 12 to 22 is alpha helix 1; the sequence is LAEVIDRILDK. The interval 26 to 34 is beta-strand 1; sequence VDAWVRVSL. Residues 35–37 are beta turn; sequence VGI. The segment at 38-46 is beta-strand 2; it reads ELLAIEARI. The alpha helix 2 stretch occupies residues 51–70; sequence VETYLKYAEAVGLTQSAAVP.

This sequence belongs to the gas vesicle GvpA family. In terms of assembly, the gas vesicle shell is 2 nm thick and consists of a single layer of this protein. It forms helical ribs nearly perpendicular to the long axis of the vesicle.

The protein localises to the gas vesicle shell. Gas vesicles are hollow, gas filled proteinaceous nanostructures found in some microorganisms. During planktonic growth they allow positioning of the organism at a favorable depth for light or nutrient acquisition. GvpA forms the protein shell. This Microchaete diplosiphon (Fremyella diplosiphon) protein is Gas vesicle protein A.